Consider the following 304-residue polypeptide: Cell surface-binding protein OPG105 (304 aa).

The Alpha-carbonic anhydrase domain maps to 1–235 (MSQQLSPINI…NDDTEVYYSG (235 aa)). At 1–275 (MSQQLSPINI…YQKYIEGNKT (275 aa)) the chain is on the virion surface side. A helical membrane pass occupies residues 276–294 (FAIIAIVFVYILTAILFLM). Topologically, residues 295-304 (SRRYSREKQN) are intravirion.

The protein belongs to the alpha-carbonic anhydrase family. In terms of assembly, homodimer; disulfide-linked. Apparently non-glycosylated.

It localises to the virion membrane. Its function is as follows. Binds to chondroitin sulfate on the cell surface to provide virion attachment to target cell. This chain is Cell surface-binding protein OPG105 (OPG105), found in Homo sapiens (Human).